The primary structure comprises 263 residues: Adaptin ear-binding coat-associated protein 2 (263 aa).

Disordered regions lie at residues 166–194 (KKKE…PPGG) and 219–263 (APSS…WVQF). Phosphoserine is present on serine 181. 2 consecutive short sequence motifs (WXXF motif) follow at residues 240–243 (WGDF) and 260–263 (WVQF). Residues 246–263 (STGSTSSQTQPGTGWVQF) are compositionally biased toward low complexity.

This sequence belongs to the NECAP family. In terms of assembly, interacts with AP1G1 and AP2A1 components of the adapter protein complexes AP-1 and AP-2. Interacts with the GAE domain proteins GGA1, GGA2 and GGA3.

The protein localises to the cytoplasmic vesicle. The protein resides in the clathrin-coated vesicle membrane. Its subcellular location is the cell membrane. Its function is as follows. Involved in endocytosis. The polypeptide is Adaptin ear-binding coat-associated protein 2 (NECAP2) (Homo sapiens (Human)).